The sequence spans 500 residues: Glucose-1-phosphate adenylyltransferase large subunit, chloroplastic/amyloplastic (500 aa).

A chloroplast-targeting transit peptide spans 1–33 (RASPPSESRAPLRAPQRSATRQHQARQGPRRMC). Residues 1–47 (RASPPSESRAPLRAPQRSATRQHQARQGPRRMCNGGRGPPYWTAGVT) form a disordered region.

Belongs to the bacterial/plant glucose-1-phosphate adenylyltransferase family. As to quaternary structure, heterotetramer.

Its subcellular location is the plastid. It localises to the chloroplast. The protein localises to the amyloplast. It carries out the reaction alpha-D-glucose 1-phosphate + ATP + H(+) = ADP-alpha-D-glucose + diphosphate. Its pathway is glycan biosynthesis; starch biosynthesis. Its activity is regulated as follows. Insensitive to 3'phosphoglycerate and orthophosphate. In terms of biological role, this protein plays a role in synthesis of starch. It catalyzes the synthesis of the activated glycosyl donor, ADP-glucose from Glc-1-P and ATP. This is Glucose-1-phosphate adenylyltransferase large subunit, chloroplastic/amyloplastic (AGA.7) from Triticum aestivum (Wheat).